Reading from the N-terminus, the 190-residue chain is Dynactin subunit 6 (190 aa).

Phosphothreonine; by CDK1 is present on T186.

This sequence belongs to the dynactin subunits 5/6 family. Dynactin subunit 6 subfamily. Subunit of dynactin, a multiprotein complex part of a tripartite complex with dynein and a adapter, such as BICDL1, BICD2 or HOOK3. The dynactin complex is built around ACTR1A/ACTB filament and consists of an actin-related filament composed of a shoulder domain, a pointed end and a barbed end. Its length is defined by its flexible shoulder domain. The soulder is composed of 2 DCTN1 subunits, 4 DCTN2 and 2 DCTN3. The 4 DCNT2 (via N-terminus) bind the ACTR1A filament and act as molecular rulers to determine the length. The pointed end is important for binding dynein-dynactin cargo adapters. Consists of 4 subunits: ACTR10, DCNT4, DCTN5 and DCTN6. Within the complex DCTN6 forms a heterodimer with DCTN5. The barbed end is composed of a CAPZA1:CAPZB heterodimers, which binds ACTR1A/ACTB filament and dynactin and stabilizes dynactin. Interacts with PLK1. Interacts with N4BP2L1. In terms of processing, phosphorylation at Thr-186 by CDK1 during mitotic prometaphase creates a binding site for PLK1 that facilitates its recruitment to kinetochores. In terms of tissue distribution, ubiquitous.

It localises to the cytoplasm. Its subcellular location is the cytoskeleton. The protein resides in the chromosome. The protein localises to the centromere. It is found in the kinetochore. Part of the dynactin complex that activates the molecular motor dynein for ultra-processive transport along microtubules. This is Dynactin subunit 6 from Homo sapiens (Human).